Here is a 1451-residue protein sequence, read N- to C-terminus: DNA polymerase III PolC-type (1451 aa).

Residues 416 to 575 (FVIFDIETTG…YDTEALKKVF (160 aa)) form the Exonuclease domain.

This sequence belongs to the DNA polymerase type-C family. PolC subfamily.

It is found in the cytoplasm. The catalysed reaction is DNA(n) + a 2'-deoxyribonucleoside 5'-triphosphate = DNA(n+1) + diphosphate. Functionally, required for replicative DNA synthesis. This DNA polymerase also exhibits 3' to 5' exonuclease activity. The protein is DNA polymerase III PolC-type of Mycoplasma genitalium (strain ATCC 33530 / DSM 19775 / NCTC 10195 / G37) (Mycoplasmoides genitalium).